The sequence spans 149 residues: Large ribosomal subunit protein bL9 (149 aa).

It belongs to the bacterial ribosomal protein bL9 family.

In terms of biological role, binds to the 23S rRNA. The polypeptide is Large ribosomal subunit protein bL9 (Ligilactobacillus salivarius (strain UCC118) (Lactobacillus salivarius)).